Reading from the N-terminus, the 306-residue chain is Serine/threonine-protein kinase KIN28 (306 aa).

One can recognise a Protein kinase domain in the interval 7 to 290; it reads YTKEKKVGEG…AVQCLESDYF (284 aa). Residues 13–21 and Lys36 each bind ATP; that span reads VGEGTYAVV. Asp129 acts as the Proton acceptor in catalysis. Phosphothreonine; by CAK is present on Thr162.

The protein belongs to the protein kinase superfamily. CMGC Ser/Thr protein kinase family. CDC2/CDKX subfamily. In terms of assembly, CCL1 and KIN28 form the TFIIK complex, a component of the TFIIH holo complex. Component of a complex consisting of KIN28, CCL1 and TFB3. Interacts with TFB3. Also interacts with HNT1 and HOG1. Phosphorylation of Thr-162 regulates the affinity of interaction between CCL1, KIN28 and TFB3. Thr-162 phosphorylation does not vary through the cell cycle and is necessary for full kinase activity.

The protein localises to the nucleus. The catalysed reaction is [DNA-directed RNA polymerase] + ATP = phospho-[DNA-directed RNA polymerase] + ADP + H(+). Functionally, catalytic component of the TFIIK complex (KIN28-CCL1 dimer) which is the protein kinase component of transcription factor IIH (TFIIH) and phosphorylates the C-terminal domain of RNA polymerase II during transition from transcription to elongation after preinitiation complex (PIC) formation, thereby positively regulating transcription. TFIIH (or factor B) is essential for both basal and activated transcription, and is involved in nucleotide excision repair (NER) of damaged DNA. TFIIH has DNA-dependent ATPase activity and is essential for polymerase II transcription in vitro. Essential for cell proliferation. This chain is Serine/threonine-protein kinase KIN28 (KIN28), found in Saccharomyces cerevisiae (strain ATCC 204508 / S288c) (Baker's yeast).